The following is a 443-amino-acid chain: Ribosomal protein uS12 methylthiotransferase RimO (443 aa).

One can recognise an MTTase N-terminal domain in the interval 1–114 (MGFVSLGCPK…VMQAVHTHLP (114 aa)). The [4Fe-4S] cluster site is built by Cys8, Cys44, Cys73, Cys145, Cys149, and Cys152. Residues 131-372 (LTPKHYAYLK…MEVAEEVSAR (242 aa)) enclose the Radical SAM core domain. A TRAM domain is found at 375–443 (QRKVGQTLRV…ADGHDLWGAV (69 aa)).

The protein belongs to the methylthiotransferase family. RimO subfamily. [4Fe-4S] cluster is required as a cofactor.

It is found in the cytoplasm. It carries out the reaction L-aspartate(89)-[ribosomal protein uS12]-hydrogen + (sulfur carrier)-SH + AH2 + 2 S-adenosyl-L-methionine = 3-methylsulfanyl-L-aspartate(89)-[ribosomal protein uS12]-hydrogen + (sulfur carrier)-H + 5'-deoxyadenosine + L-methionine + A + S-adenosyl-L-homocysteine + 2 H(+). Catalyzes the methylthiolation of an aspartic acid residue of ribosomal protein uS12. This is Ribosomal protein uS12 methylthiotransferase RimO from Cupriavidus necator (strain ATCC 17699 / DSM 428 / KCTC 22496 / NCIMB 10442 / H16 / Stanier 337) (Ralstonia eutropha).